The sequence spans 119 residues: Large ribosomal subunit protein uL18 (119 aa).

Belongs to the universal ribosomal protein uL18 family. In terms of assembly, part of the 50S ribosomal subunit; part of the 5S rRNA/L5/L18/L25 subcomplex. Contacts the 5S and 23S rRNAs.

In terms of biological role, this is one of the proteins that bind and probably mediate the attachment of the 5S RNA into the large ribosomal subunit, where it forms part of the central protuberance. This Mycoplasmoides gallisepticum (strain R(low / passage 15 / clone 2)) (Mycoplasma gallisepticum) protein is Large ribosomal subunit protein uL18.